The chain runs to 880 residues: Protein translocase subunit SecA (880 aa).

ATP is bound by residues Q86, G104–T108, and D511. Residues A837 to K871 form a disordered region. The span at Q841 to R860 shows a compositional bias: basic and acidic residues. C864, C866, C875, and C876 together coordinate Zn(2+).

It belongs to the SecA family. In terms of assembly, monomer and homodimer. Part of the essential Sec protein translocation apparatus which comprises SecA, SecYEG and auxiliary proteins SecDF. Other proteins may also be involved. Requires Zn(2+) as cofactor.

The protein localises to the cell inner membrane. The protein resides in the cytoplasm. It carries out the reaction ATP + H2O + cellular proteinSide 1 = ADP + phosphate + cellular proteinSide 2.. Its function is as follows. Part of the Sec protein translocase complex. Interacts with the SecYEG preprotein conducting channel. Has a central role in coupling the hydrolysis of ATP to the transfer of proteins into and across the cell membrane, serving as an ATP-driven molecular motor driving the stepwise translocation of polypeptide chains across the membrane. The sequence is that of Protein translocase subunit SecA from Thermodesulfovibrio yellowstonii (strain ATCC 51303 / DSM 11347 / YP87).